Consider the following 239-residue polypeptide: Ribonuclease PH (239 aa).

Phosphate-binding positions include Arg-86 and 124 to 126 (GTR).

The protein belongs to the RNase PH family. As to quaternary structure, homohexameric ring arranged as a trimer of dimers.

The enzyme catalyses tRNA(n+1) + phosphate = tRNA(n) + a ribonucleoside 5'-diphosphate. Phosphorolytic 3'-5' exoribonuclease that plays an important role in tRNA 3'-end maturation. Removes nucleotide residues following the 3'-CCA terminus of tRNAs; can also add nucleotides to the ends of RNA molecules by using nucleoside diphosphates as substrates, but this may not be physiologically important. Probably plays a role in initiation of 16S rRNA degradation (leading to ribosome degradation) during starvation. This Rhizobium johnstonii (strain DSM 114642 / LMG 32736 / 3841) (Rhizobium leguminosarum bv. viciae) protein is Ribonuclease PH.